Reading from the N-terminus, the 410-residue chain is MVLSQRQRDELNRAIADYLRSNGYEEAYSVFKKEAELDMNEELDKKYAGLLEKKWTSVIRLQKKVMELESKLNEAKEEFTSGGPIGQKRDPKEWIPRPPEKYALSGHRSPVTRVIFHPVFSVMVTASEDATIKVWDYETGDFERTLKGHTDSVQDISFDHSGKLLASCSADMTIKLWDFQGFECIRTMHGHDHNVSSVAIMPNGDHIVSASRDKTIKMWEVQTGYCVKTFTGHREWVRMVRPNQDGTLIASCSNDQTVRVWVVATKECKAELREHEHVVECISWAPESSYSTISDATGSETKKSGKPGPFLLSGSRDKTIKMWDISIGMCLMTLVGHDNWVRGVQFHPGGKFILSCADDKTIRIWDYKNKRCMKTLNAHEHFVTSLDFHKTAPYVVTGSVDQTVKVWECR.

The LisH domain maps to 7-39; that stretch reads QRDELNRAIADYLRSNGYEEAYSVFKKEAELDM. A coiled-coil region spans residues 56–82; it reads TSVIRLQKKVMELESKLNEAKEEFTSG. WD repeat units lie at residues 106-147, 148-187, 190-229, 232-271, 274-333, 336-377, and 379-410; these read GHRS…RTLK, GHTD…CIRT, GHDH…CVKT, GHRE…CKAE, EHEH…CLMT, GHDN…KTLN, and HEHF…WECR.

Belongs to the WD repeat LIS1/nudF family. As to quaternary structure, can self-associate. Component of the cytosolic PAF-AH (I) heterotetrameric enzyme, which is composed of PAFAH1B1 (beta), PAFAH1B2 (alpha2) and PAFAH1B3 (alpha1) subunits. The catalytic activity of the enzyme resides in the alpha1 (PAFAH1B3) and alpha2 (PAFAH1B2) subunits, whereas the beta subunit (PAFAH1B1) has regulatory activity. Trimer formation is not essential for the catalytic activity. Interacts with dynein, dynactin, nde1 and ndel1.

It localises to the cytoplasm. The protein resides in the cytoskeleton. The protein localises to the microtubule organizing center. Its subcellular location is the centrosome. In terms of biological role, regulatory subunit (beta subunit) of the cytosolic type I platelet-activating factor (PAF) acetylhydrolase (PAF-AH (I)), an enzyme that catalyzes the hydrolyze of the acetyl group at the sn-2 position of PAF and its analogs and participates in the PAF inactivation. Positively regulates the activity of the minus-end directed microtubule motor protein dynein. May enhance dynein-mediated microtubule sliding by targeting dynein to the microtubule plus end. Required for several dynein- and microtubule-dependent processes such as the maintenance of Golgi integrity, the peripheral transport of microtubule fragments and the coupling of the nucleus and centrosome. May be required for proliferation of neuronal precursors and neuronal migration. The protein is Lissencephaly-1 homolog (pafah1b1) of Xenopus tropicalis (Western clawed frog).